The sequence spans 980 residues: Chitin binding domain containing chtb-2 (980 aa).

Positions 1–20 (MRTMHCFLFILLFCLGQVFT) are cleaved as a signal peptide. 2 N-linked (GlcNAc...) asparagine glycosylation sites follow: N187 and N190. 3 disordered regions span residues 310 to 354 (ERQQ…AELD), 431 to 451 (QEEERQRKIQQQKVEMEQIRQ), and 486 to 512 (EILRQQEEDQKKKKLEKDREQREQQEA). Residues N941 and N975 are each glycosylated (N-linked (GlcNAc...) asparagine).

The protein is Chitin binding domain containing chtb-2 of Caenorhabditis elegans.